The chain runs to 261 residues: CD40 ligand (261 aa).

Residues 1-22 (MIETYNQPSPRSAATGLPVRMK) lie on the Cytoplasmic side of the membrane. The chain crosses the membrane as a helical; Signal-anchor for type II membrane protein span at residues 23-43 (IFMYLLTIFLITQMIGSALFA). The Extracellular portion of the chain corresponds to 44–261 (VYLHRRLDKI…GFTSFGLLKL (218 aa)). Positions 122-261 (IAAHVISEAS…GFTSFGLLKL (140 aa)) constitute a THD domain. C178 and C218 are disulfide-bonded. N-linked (GlcNAc...) asparagine glycosylation is present at N240.

This sequence belongs to the tumor necrosis factor family. In terms of assembly, homotrimer. Interacts with CD28. CD40 ligand, soluble form: Exists as either a monomer or a homotrimer. Forms a ternary complex between CD40 and integrins for CD40-CD40LG signaling. In terms of processing, the soluble form derives from the membrane form by proteolytic processing.

Its subcellular location is the cell membrane. It localises to the cell surface. The protein resides in the secreted. In terms of biological role, cytokine that acts as a ligand to CD40/TNFRSF5. Costimulates T-cell proliferation and cytokine production. Its cross-linking on T-cells generates a costimulatory signal which enhances the production of IL4 and IL10 in conjunction with the TCR/CD3 ligation and CD28 costimulation. Induces the activation of NF-kappa-B. Induces the activation of kinases MAPK8 and PAK2 in T-cells. Mediates B-cell proliferation in the absence of co-stimulus as well as IgE production in the presence of IL4. Involved in immunoglobulin class switching. Functionally, acts as a ligand for integrins, specifically ITGA5:ITGB1 and ITGAV:ITGB3; both integrins and the CD40 receptor are required for activation of CD40-CD40LG signaling, which have cell-type dependent effects, such as B-cell activation, NF-kappa-B signaling and anti-apoptotic signaling. The sequence is that of CD40 ligand (CD40LG) from Cercocebus atys (Sooty mangabey).